The following is a 319-amino-acid chain: Ribosomal RNA small subunit methyltransferase H (319 aa).

Residues 37-39, aspartate 57, phenylalanine 96, aspartate 105, and glutamine 112 contribute to the S-adenosyl-L-methionine site; that span reads GGY. The span at 292–302 shows a compositional bias: basic and acidic residues; that stretch reads RPDEREKERNP. Positions 292-319 are disordered; the sequence is RPDEREKERNPRSRSARLRAVEKQGVPA.

It belongs to the methyltransferase superfamily. RsmH family.

Its subcellular location is the cytoplasm. The catalysed reaction is cytidine(1402) in 16S rRNA + S-adenosyl-L-methionine = N(4)-methylcytidine(1402) in 16S rRNA + S-adenosyl-L-homocysteine + H(+). Functionally, specifically methylates the N4 position of cytidine in position 1402 (C1402) of 16S rRNA. The polypeptide is Ribosomal RNA small subunit methyltransferase H (Syntrophobacter fumaroxidans (strain DSM 10017 / MPOB)).